The primary structure comprises 282 residues: Probable protein phosphatase 2C 10 (282 aa).

The PPM-type phosphatase domain occupies Lys34–Leu281. Mn(2+) contacts are provided by Asp71, Gly72, Asp233, and Asp272.

Belongs to the PP2C family. Mg(2+) serves as cofactor. Mn(2+) is required as a cofactor.

It carries out the reaction O-phospho-L-seryl-[protein] + H2O = L-seryl-[protein] + phosphate. The catalysed reaction is O-phospho-L-threonyl-[protein] + H2O = L-threonyl-[protein] + phosphate. This chain is Probable protein phosphatase 2C 10, found in Arabidopsis thaliana (Mouse-ear cress).